Reading from the N-terminus, the 266-residue chain is 4-hydroxy-tetrahydrodipicolinate reductase (266 aa).

An NAD(+)-binding site is contributed by 11–16 (GALGKM). K39 is a binding site for NADP(+). Position 100 to 102 (100 to 102 (GTT)) interacts with NAD(+). H156 acts as the Proton donor/acceptor in catalysis. H157 contributes to the (S)-2,3,4,5-tetrahydrodipicolinate binding site. K160 serves as the catalytic Proton donor. A (S)-2,3,4,5-tetrahydrodipicolinate-binding site is contributed by 166–167 (GT).

It belongs to the DapB family.

The protein resides in the cytoplasm. It catalyses the reaction (S)-2,3,4,5-tetrahydrodipicolinate + NAD(+) + H2O = (2S,4S)-4-hydroxy-2,3,4,5-tetrahydrodipicolinate + NADH + H(+). It carries out the reaction (S)-2,3,4,5-tetrahydrodipicolinate + NADP(+) + H2O = (2S,4S)-4-hydroxy-2,3,4,5-tetrahydrodipicolinate + NADPH + H(+). The protein operates within amino-acid biosynthesis; L-lysine biosynthesis via DAP pathway; (S)-tetrahydrodipicolinate from L-aspartate: step 4/4. In terms of biological role, catalyzes the conversion of 4-hydroxy-tetrahydrodipicolinate (HTPA) to tetrahydrodipicolinate. This chain is 4-hydroxy-tetrahydrodipicolinate reductase, found in Syntrophomonas wolfei subsp. wolfei (strain DSM 2245B / Goettingen).